Consider the following 445-residue polypeptide: Tubulin beta-4B chain (445 aa).

The MREI motif motif lies at 1–4 (MREI). Residue glutamine 11 coordinates GTP. The residue at position 55 (threonine 55) is a Phosphothreonine. The residue at position 58 (lysine 58) is an N6-acetyllysine. Residues glutamate 69, serine 138, glycine 142, threonine 143, and glycine 144 each contribute to the GTP site. Glutamate 69 contacts Mg(2+). Phosphoserine; by CDK1 is present on serine 172. GTP is bound by residues asparagine 204 and asparagine 226. The interval 426-445 (QDATAEEEGEFEEEAEEEVA) is disordered. A compositionally biased stretch (acidic residues) spans 429-445 (TAEEEGEFEEEAEEEVA). Glutamate 438 carries the post-translational modification 5-glutamyl polyglutamate.

This sequence belongs to the tubulin family. As to quaternary structure, dimer of alpha and beta chains. A typical microtubule is a hollow water-filled tube with an outer diameter of 25 nm and an inner diameter of 15 nM. Alpha-beta heterodimers associate head-to-tail to form protofilaments running lengthwise along the microtubule wall with the beta-tubulin subunit facing the microtubule plus end conferring a structural polarity. Microtubules usually have 13 protofilaments but different protofilament numbers can be found in some organisms and specialized cells. Component of sperm flagellar doublet microtubules. It depends on Mg(2+) as a cofactor. Some glutamate residues at the C-terminus are polyglycylated, resulting in polyglycine chains on the gamma-carboxyl group. Glycylation is mainly limited to tubulin incorporated into axonemes (cilia and flagella) whereas glutamylation is prevalent in neuronal cells, centrioles, axonemes, and the mitotic spindle. Both modifications can coexist on the same protein on adjacent residues, and lowering polyglycylation levels increases polyglutamylation, and reciprocally. Cilia and flagella glycylation is required for their stability and maintenance. Flagella glycylation controls sperm motility. In terms of processing, some glutamate residues at the C-terminus are polyglutamylated, resulting in polyglutamate chains on the gamma-carboxyl group. Polyglutamylation plays a key role in microtubule severing by spastin (SPAST). SPAST preferentially recognizes and acts on microtubules decorated with short polyglutamate tails: severing activity by SPAST increases as the number of glutamates per tubulin rises from one to eight, but decreases beyond this glutamylation threshold. Glutamylation is also involved in cilia motility. Post-translationally, phosphorylated on Ser-172 by CDK1 during the cell cycle, from metaphase to telophase, but not in interphase. This phosphorylation inhibits tubulin incorporation into microtubules.

It localises to the cytoplasm. The protein resides in the cytoskeleton. Its subcellular location is the flagellum axoneme. Functionally, tubulin is the major constituent of microtubules, a cylinder consisting of laterally associated linear protofilaments composed of alpha- and beta-tubulin heterodimers. Microtubules grow by the addition of GTP-tubulin dimers to the microtubule end, where a stabilizing cap forms. Below the cap, tubulin dimers are in GDP-bound state, owing to GTPase activity of alpha-tubulin. The protein is Tubulin beta-4B chain (TUBB4B) of Bos taurus (Bovine).